A 2549-amino-acid polypeptide reads, in one-letter code: Serine/threonine-protein kinase mTOR (2549 aa).

Residue Met1 is modified to N-acetylmethionine. Residues 1 to 651 (MLGTGPATAT…HVVSQTAVQV (651 aa)) are interaction with NBN. HEAT repeat units lie at residues 16-53 (SSNVSVLQQFASGLKSRNEETRAKAAKELQHYVTMELR), 55-99 (MSQE…VEGG), 100-137 (NSTRIGRFANYLRNLLPSSDPVVMEMASKAIGRLAMAG), 138-179 (DTFT…AISV), 180-220 (PTFF…LILT), 222-276 (QREP…RISS), 277-313 (MEGERLREEMEEITQQQLVHDKYCKDLMGFGTKPRHI), 314-364 (TPFT…CCRD), 365-409 (LMEE…AFTD), 410-445 (TQYLQDTMNHVLSCVKKEKERTAAFQALGLLSVAVR), 446-494 (SEFK…RAMG), 495-529 (PGIQQDIKELLEPMLAVGLSPALTAVLYDLSRQIP), 530-563 (QLKKDIQDGLLKMLSLVLMHKPLRHPGMPKGLAH), 564-596 (QLASPGLTTLPEASDVASITLALRTLGSFEFEG), 597-636 (HSLTQFVRHCADHFLNSEHKEIRMEAARTCSRLLTPSIHL), 637-683 (ISGH…DERF), 686-724 (HLAQAENLQALFVALNDQVFEIRELAICTVGRLSSMNPA), 727-766 (MPFLRKMLIQILTELEHSGIGRIKEQSARMLGHLVSNAPR), 769-811 (RPYM…VSGL), 814-853 (RKWVDELFVIIMDMLQDSSLLAKRQVALWTLGQLVASTGY), 857-893 (PYRKYPTLLEVLLNFLKTEQNQGTRREAIRVLGLLGA), 894-942 (LDPY…GNLP), 943-988 (LDEF…KCVQ), 989-1027 (FLPQVMPTFLNVIRVCDGAIREFLFQQLGMLVSFVKSHI), 1029-1068 (PYMDEIVTLMREFWVMNTSIQSTIILLIEQIVVALGGEFK), 1069-1105 (LYLPQLIPHMLRVFMHDNSQGRIVSIKLLAAIQLFGA), 1106-1144 (NLDDYLHLLLPPIVKLFDAPEVPLPSRKAALETVDRLTE), 1145-1188 (SLDF…GKKY), 1189-1225 (QIFIPMVNKVLVRHRINHQRYDVLICRIVKGYTLADE), 1226-1273 (EEDP…GAAR), 1274-1311 (RVSKDDWLEWLRRLSLELLKDSSSPSLRSCWALAQAYN), and 1312-1345 (PMARDLFNAAFVSCWSELNEDQQDELIRSIELAL). Ser567 carries the post-translational modification Phosphoserine. The residue at position 1162 (Thr1162) is a Phosphothreonine. An N6-acetyllysine modification is found at Lys1218. Ser1261 carries the post-translational modification Phosphoserine. TPR repeat units lie at residues 1346–1382 (TSQDIAEVTQTLLNLAEFMEHSDKGPLPLRDDNGIVL), 1383–1408 (LGERAAKCRAYAKALHYKELEFQKGP), 1409–1442 (TPAILESLISINNKLQQPEAASGVLEYAMKHFGE), 1443–1473 (LEIQATWYEKLHEWEDALVAYDKKMDTNKDD), 1474–1507 (PELMLGRMRCLEALGEWGQLHQQCCEKWTLVNDE), 1508–1541 (TQAKMARMAAAAAWGLGQWDSMEEYTCMIPRDTH), 1542–1574 (DGAFYRAVLALHQDLFSLAQQCIDKARDLLDAE), 1575–1614 (LTAMAGESYSRAYGAMVSCHMLSELEEVIQYKLVPERREI), 1615–1649 (IRQIWWERLQGCQRIVEDWQKILMVRSLVVSPHED), 1650–1693 (MRTW…PTVH), 1694–1731 (PQVTYAYMKNMWKSARKIDAFQHMQHFVQTMQQQAQHA), 1732–1786 (IATE…DRSW), 1787–1846 (YKAW…STEG), 1898–1930 (NNLQDTLRVLTLWFDYGHWPDVNEALVEGVKAI), 1931–1970 (QIDTWLQVIPQLIARIDTPRPLVGRLIHQLLTDIGRYHPQ), and 1971–2005 (ALIYPLTVASKSTTTARHNAANKILKNMCEHSNTL). Residues 1382 to 1982 (LLGERAAKCR…IYPLTVASKS (601 aa)) form the FAT domain. 1D-myo-inositol hexakisphosphate is bound by residues Lys1662, Lys1702, and Arg1749. Residues 1812–1867 (DEKKKLRHASGANITNATTTATTAASAAAATSTEGSNSESEAESNESSPTPSPLQK) are disordered. Positions 1826–1860 (TNATTTATTAASAAAATSTEGSNSESEAESNESSP) are enriched in low complexity. Residues 2012–2144 (VSEELIRVAI…DLELAVPGTY (133 aa)) are sufficient for interaction with the FKBP1A/rapamycin complex. Lys2066 is covalently cross-linked (Glycyl lysine isopeptide (Lys-Gly) (interchain with G-Cter in ubiquitin)). In terms of domain architecture, PI3K/PI4K catalytic spans 2156–2469 (IAPSLQVITS…GVELGEPAHK (314 aa)). A Phosphoserine modification is found at Ser2159. The segment at 2162 to 2168 (VITSKQR) is G-loop. The residue at position 2164 (Thr2164) is a Phosphothreonine. ATP-binding residues include Ser2165 and Gln2167. Thr2173 bears the Phosphothreonine; by PKB/AKT1 mark. Residues Leu2185, Lys2187, Glu2190, Tyr2225, Gly2238, Trp2239, Val2240, and Thr2245 each coordinate ATP. An interaction with MLST8 region spans residues 2258–2296 (KILLNIEHRIMLRMAPDYDHLTLMQKVEVFEHAVNNTAG). Positions 2335-2343 (GLGDRHPSN) are catalytic loop. Residue Asn2343 participates in Mg(2+) binding. ATP-binding residues include Met2345 and Ile2356. The activation loop stretch occupies residues 2355-2380 (HIDFGDCFEVAMTREKFPEKIPFRLT). Asp2357 is a Mg(2+) binding site. Thr2446 is subject to Phosphothreonine; by RPS6KB1. Ser2448 is modified (phosphoserine; by RPS6KB1). Position 2478 is a phosphoserine (Ser2478). Ser2481 carries the post-translational modification Phosphoserine; by autocatalysis. Positions 2517 to 2549 (DTLDVPTQVELLIKQATSHENLCQCYIGWCPFW) constitute an FATC domain.

This sequence belongs to the PI3/PI4-kinase family. As to quaternary structure, part of the mechanistic target of rapamycin complex 1 (mTORC1) which contains MTOR, MLST8 and RPTOR. The mTORC1 complex is a 1 Md obligate dimer of two stoichiometric heterotetramers with overall dimensions of 290 A x 210 A x 135 A. It has a rhomboid shape and a central cavity, the dimeric interfaces are formed by interlocking interactions between the two MTOR and the two RPTOR subunits. The MLST8 subunit forms distal foot-like protuberances, and contacts only one MTOR within the complex, while the small AKT1S1/PRAS40 localizes to the midsection of the central core, in close proximity to RPTOR. mTORC1 associates with AKT1S1/PRAS40, which inhibits its activity by blocking MTOR substrate-recruitment site. Component of the mechanistic target of rapamycin complex 2 (mTORC2), consisting in two heterotretramers composed of MTOR, MLST8, RICTOR and MAPKAP1/SIN1. Interacts with PLPP7 and PML. Interacts with PRR5 and RICTOR; the interaction is direct within the mTORC2 complex and interaction with RICTOR is enhanced by deubiquitination of RICTOR by USP9X. mTORC1 and mTORC2 associate with DEPTOR, which regulates their activity. Interacts with WAC; WAC positively regulates MTOR activity by promoting the assembly of the TTT complex composed of TELO2, TTI1 and TTI2 and the RUVBL complex composed of RUVBL1 and RUVBL2 into the TTT-RUVBL complex which leads to the dimerization of the mTORC1 complex and its subsequent activation. Interacts with UBQLN1. Interacts with TTI1 and TELO2. Interacts with CLIP1; phosphorylates and regulates CLIP1. Interacts with NBN. Interacts with HTR6. Interacts with BRAT1. Interacts with MEAK7 (via C-terminal domain); the interaction increases upon nutrient stimulation. Interacts with TM4SF5; the interaction is positively regulated by arginine and is negatively regulated by leucine. Interacts with GPR137B. Interacts with NCKAP1L. Interacts with TPCN1 and TPCN2; the interaction is required for TPCN1 and TPCN2 sensitivity to ATP. Interacts with ATP6V1A and with CRYAB, forming a ternary complex. Interacts with SLC38A7; this interaction mediates the recruitment of mTORC1 to the lysosome and its subsequent activation. Interacts with TSPAN8. In terms of processing, autophosphorylates when part of mTORC1 or mTORC2. Phosphorylation at Ser-1261, Ser-2159 and Thr-2164 promotes autophosphorylation. Phosphorylated at Ser-2448 by RPS6KB1. Phosphorylation in the kinase domain modulates the interactions of MTOR with RPTOR and AKT1S1/PRAS40 and leads to increased intrinsic mTORC1 kinase activity. Phosphorylation at Ser-2159 by TBK1 in response to growth factors and pathogen recognition receptors promotes mTORC1 activity. Phosphorylation at Ser-2159 by TBK1 in response to EGF growth factor promotes mTORC2 activity, leading to AKT1 phosphorylation and activation. Phosphorylation at Thr-2173 in the ATP-binding region by AKT1 strongly reduces kinase activity. Ubiquitinated at Lys-2066 by the SCF(FBXO22) complex via 'Lys-27'-linked ubiquitination prevents mTORC1 substrate recruitment.

The protein resides in the lysosome membrane. The protein localises to the endoplasmic reticulum membrane. Its subcellular location is the golgi apparatus membrane. It is found in the cell membrane. It localises to the mitochondrion outer membrane. The protein resides in the cytoplasm. The protein localises to the nucleus. Its subcellular location is the PML body. It is found in the microsome membrane. It localises to the cytoplasmic vesicle. The protein resides in the phagosome. The catalysed reaction is L-seryl-[protein] + ATP = O-phospho-L-seryl-[protein] + ADP + H(+). It catalyses the reaction L-threonyl-[protein] + ATP = O-phospho-L-threonyl-[protein] + ADP + H(+). The enzyme catalyses L-tyrosyl-[protein] + ATP = O-phospho-L-tyrosyl-[protein] + ADP + H(+). With respect to regulation, the mTORC1 complex is activated in response to nutrients, growth factors or amino acids: activation requires relocalization of the mTORC1 complex to lysosomes that is mediated by the Ragulator complex, SLC38A9, and the Rag GTPases RagA/RRAGA, RagB/RRAGB, RagC/RRAGC and RagD/RRAGD. Activation of mTORC1 by growth factors such as insulin involves AKT1-mediated phosphorylation of TSC1-TSC2, which leads to the activation of the RHEB GTPase a potent activator of the protein kinase activity of mTORC1. Insulin-stimulated and amino acid-dependent phosphorylation at Ser-1261 promotes autophosphorylation and the activation of mTORC1. On the other hand, low cellular energy levels can inhibit mTORC1 through activation of PRKAA1 while hypoxia inhibits mTORC1 through a REDD1-dependent mechanism which may also require PRKAA1. The kinase activity of MTOR within the mTORC1 complex is positively regulated by MLST8. The kinase activity of MTOR is inhibited by DEPTOR and AKT1S1. The non-canonical mTORC1 complex is independent of the RHEB GTPase and specifically mediates phosphorylation of MiT/TFE factors TFEB and TFE3 but not other mTORC1 substrates: it is activated by FLCN, which activates Rag GTPases RagC/RRAGC and RagD/RRAGD. MTOR is the target of the immunosuppressive and anti-cancer drug rapamycin which acts in complex with FKBP1A/FKBP12, and specifically inhibits its kinase activity. mTORC2 is also activated by growth factors, but seems to be nutrient-insensitive. mTORC2 associates and is directly activated by ribosomes. mTORC2 may also be regulated by RHEB but in an indirect manner through the PI3K signaling pathway. Functionally, serine/threonine protein kinase which is a central regulator of cellular metabolism, growth and survival in response to hormones, growth factors, nutrients, energy and stress signals. MTOR directly or indirectly regulates the phosphorylation of at least 800 proteins. Functions as part of 2 structurally and functionally distinct signaling complexes mTORC1 and mTORC2 (mTOR complex 1 and 2). In response to nutrients, growth factors or amino acids, mTORC1 is recruited to the lysosome membrane and promotes protein, lipid and nucleotide synthesis by phosphorylating key regulators of mRNA translation and ribosome synthesis. This includes phosphorylation of EIF4EBP1 and release of its inhibition toward the elongation initiation factor 4E (eiF4E). Moreover, phosphorylates and activates RPS6KB1 and RPS6KB2 that promote protein synthesis by modulating the activity of their downstream targets including ribosomal protein S6, eukaryotic translation initiation factor EIF4B, and the inhibitor of translation initiation PDCD4. Stimulates the pyrimidine biosynthesis pathway, both by acute regulation through RPS6KB1-mediated phosphorylation of the biosynthetic enzyme CAD, and delayed regulation, through transcriptional enhancement of the pentose phosphate pathway which produces 5-phosphoribosyl-1-pyrophosphate (PRPP), an allosteric activator of CAD at a later step in synthesis, this function is dependent on the mTORC1 complex. Regulates ribosome synthesis by activating RNA polymerase III-dependent transcription through phosphorylation and inhibition of MAF1 an RNA polymerase III-repressor. Activates dormant ribosomes by mediating phosphorylation of SERBP1, leading to SERBP1 inactivation and reactivation of translation. In parallel to protein synthesis, also regulates lipid synthesis through SREBF1/SREBP1 and LPIN1. To maintain energy homeostasis mTORC1 may also regulate mitochondrial biogenesis through regulation of PPARGC1A. In the same time, mTORC1 inhibits catabolic pathways: negatively regulates autophagy through phosphorylation of ULK1. Under nutrient sufficiency, phosphorylates ULK1 at 'Ser-758', disrupting the interaction with AMPK and preventing activation of ULK1. Also prevents autophagy through phosphorylation of the autophagy inhibitor DAP. Also prevents autophagy by phosphorylating RUBCNL/Pacer under nutrient-rich conditions. Prevents autophagy by mediating phosphorylation of AMBRA1, thereby inhibiting AMBRA1 ability to mediate ubiquitination of ULK1 and interaction between AMBRA1 and PPP2CA. mTORC1 exerts a feedback control on upstream growth factor signaling that includes phosphorylation and activation of GRB10 a INSR-dependent signaling suppressor. Among other potential targets mTORC1 may phosphorylate CLIP1 and regulate microtubules. The mTORC1 complex is inhibited in response to starvation and amino acid depletion. The non-canonical mTORC1 complex, which acts independently of RHEB, specifically mediates phosphorylation of MiT/TFE factors TFEB and TFE3 in the presence of nutrients, promoting their cytosolic retention and inactivation. Upon starvation or lysosomal stress, inhibition of mTORC1 induces dephosphorylation and nuclear translocation of TFEB and TFE3, promoting their transcription factor activity. The mTORC1 complex regulates pyroptosis in macrophages by promoting GSDMD oligomerization. MTOR phosphorylates RPTOR which in turn inhibits mTORC1. As part of the mTORC2 complex, MTOR transduces signals from growth factors to pathways involved in proliferation, cytoskeletal organization, lipogenesis and anabolic output. In response to growth factors, mTORC2 phosphorylates and activates AGC protein kinase family members, including AKT (AKT1, AKT2 and AKT3), PKC (PRKCA, PRKCB and PRKCE) and SGK1. In contrast to mTORC1, mTORC2 is nutrient-insensitive. mTORC2 plays a critical role in AKT1 activation by mediating phosphorylation of different sites depending on the context, such as 'Thr-450', 'Ser-473', 'Ser-477' or 'Thr-479', facilitating the phosphorylation of the activation loop of AKT1 on 'Thr-308' by PDPK1/PDK1 which is a prerequisite for full activation. mTORC2 also regulates the phosphorylation of SGK1 at 'Ser-422'. mTORC2 may regulate the actin cytoskeleton, through phosphorylation of PRKCA, PXN and activation of the Rho-type guanine nucleotide exchange factors RHOA and RAC1A or RAC1B. The mTORC2 complex also phosphorylates various proteins involved in insulin signaling, such as FBXW8 and IGF2BP1. May also regulate insulin signaling by acting as a tyrosine protein kinase that catalyzes phosphorylation of IGF1R and INSR. Regulates osteoclastogenesis by adjusting the expression of CEBPB isoforms. Plays an important regulatory role in the circadian clock function; regulates period length and rhythm amplitude of the suprachiasmatic nucleus (SCN) and liver clocks. The sequence is that of Serine/threonine-protein kinase mTOR from Rattus norvegicus (Rat).